We begin with the raw amino-acid sequence, 158 residues long: Cyclic pyranopterin monophosphate synthase (158 aa).

Residues 76-78 and 114-115 each bind substrate; these read LCH and ME. Asp129 is an active-site residue.

The protein belongs to the MoaC family. Homohexamer; trimer of dimers.

The catalysed reaction is (8S)-3',8-cyclo-7,8-dihydroguanosine 5'-triphosphate = cyclic pyranopterin phosphate + diphosphate. Its pathway is cofactor biosynthesis; molybdopterin biosynthesis. Functionally, catalyzes the conversion of (8S)-3',8-cyclo-7,8-dihydroguanosine 5'-triphosphate to cyclic pyranopterin monophosphate (cPMP). The chain is Cyclic pyranopterin monophosphate synthase from Shewanella sediminis (strain HAW-EB3).